Here is a 287-residue protein sequence, read N- to C-terminus: ATP synthase gamma chain (287 aa).

This sequence belongs to the ATPase gamma chain family. F-type ATPases have 2 components, CF(1) - the catalytic core - and CF(0) - the membrane proton channel. CF(1) has five subunits: alpha(3), beta(3), gamma(1), delta(1), epsilon(1). CF(0) has three main subunits: a, b and c.

It localises to the cell inner membrane. Its function is as follows. Produces ATP from ADP in the presence of a proton gradient across the membrane. The gamma chain is believed to be important in regulating ATPase activity and the flow of protons through the CF(0) complex. The sequence is that of ATP synthase gamma chain from Yersinia pestis.